Consider the following 640-residue polypeptide: Threonine--tRNA ligase (640 aa).

The region spanning 1–61 (MPIITLPNGD…TEDSTLQIIT (61 aa)) is the TGS domain. The segment at 242–533 (DHRKIGKALD…LIEHYAGFMP (292 aa)) is catalytic. Zn(2+) contacts are provided by Cys333, His384, and His510.

This sequence belongs to the class-II aminoacyl-tRNA synthetase family. In terms of assembly, homodimer. Zn(2+) serves as cofactor.

The protein resides in the cytoplasm. It carries out the reaction tRNA(Thr) + L-threonine + ATP = L-threonyl-tRNA(Thr) + AMP + diphosphate + H(+). Catalyzes the attachment of threonine to tRNA(Thr) in a two-step reaction: L-threonine is first activated by ATP to form Thr-AMP and then transferred to the acceptor end of tRNA(Thr). Also edits incorrectly charged L-seryl-tRNA(Thr). This chain is Threonine--tRNA ligase, found in Acinetobacter baumannii (strain AB307-0294).